We begin with the raw amino-acid sequence, 619 residues long: 1-deoxy-D-xylulose-5-phosphate synthase (619 aa).

Residues histidine 74 and 115–117 (GHS) contribute to the thiamine diphosphate site. A Mg(2+)-binding site is contributed by aspartate 146. Thiamine diphosphate is bound by residues 147-148 (GA), asparagine 175, tyrosine 285, and glutamate 365. Asparagine 175 is a Mg(2+) binding site.

It belongs to the transketolase family. DXPS subfamily. As to quaternary structure, homodimer. It depends on Mg(2+) as a cofactor. Thiamine diphosphate serves as cofactor.

The catalysed reaction is D-glyceraldehyde 3-phosphate + pyruvate + H(+) = 1-deoxy-D-xylulose 5-phosphate + CO2. The protein operates within metabolic intermediate biosynthesis; 1-deoxy-D-xylulose 5-phosphate biosynthesis; 1-deoxy-D-xylulose 5-phosphate from D-glyceraldehyde 3-phosphate and pyruvate: step 1/1. Catalyzes the acyloin condensation reaction between C atoms 2 and 3 of pyruvate and glyceraldehyde 3-phosphate to yield 1-deoxy-D-xylulose-5-phosphate (DXP). This Clostridium perfringens (strain ATCC 13124 / DSM 756 / JCM 1290 / NCIMB 6125 / NCTC 8237 / Type A) protein is 1-deoxy-D-xylulose-5-phosphate synthase.